Consider the following 494-residue polypeptide: MGFHQIDERNQALLSKIAIDDGHGENSAYFDGWKAYDNNPFHPENNPLGVIQMGLAENQLSFGMIVDWIRKHPEASICTPEGLEKFKSIANFQDYHGLQEFRKAMASFMGKVRGGRVKFDPSRIVMGGGATGASETVIFCLADPGDAFLVPSPYYAAFDRDLKWRTRAQIIPVHCNSSNNFQVTEAALEIAYKKAQEANMKVKGVIITNPSNPLGTTYDRDTLKTLVTFVNQHDIHLICDEIYSATVFKAPTFTSIAEIVEQMEHCKKELIHILYSLSKDMGLPGFRVGIIYSYNDVVVRRARQMSSFGLVSSQTQHLLAAMLSDEDFVDKFLAENSKRLGERHARFTKELDKMGITCLNSNAGVFVWMDLRRLLKDQTFKAEMELWRVIINEVKLNVSPGSSFHVTEPGWFRVCFANMDDNTVDVALNRIHSFVENIDKKEDNTVAMPSKTRHRDNKLRLSFSFSGRRYDKGNVLNSPHTMSPHSPLVRARTY.

Position 279 is an N6-(pyridoxal phosphate)lysine (Lys279). Residues Asn474–Tyr494 are disordered. Residues Val475–Pro484 show a composition bias toward polar residues.

It belongs to the class-I pyridoxal-phosphate-dependent aminotransferase family. In terms of assembly, homodimer. Pyridoxal 5'-phosphate is required as a cofactor.

It carries out the reaction S-adenosyl-L-methionine = 1-aminocyclopropane-1-carboxylate + S-methyl-5'-thioadenosine + H(+). It participates in alkene biosynthesis; ethylene biosynthesis via S-adenosyl-L-methionine; ethylene from S-adenosyl-L-methionine: step 1/2. Catalyzes the formation of 1-aminocyclopropane-1-carboxylate, a direct precursor of ethylene in higher plants. In Cucurbita pepo (Vegetable marrow), this protein is 1-aminocyclopropane-1-carboxylate synthase 2 (ACS2).